A 704-amino-acid polypeptide reads, in one-letter code: Protein NBR1 homolog (704 aa).

Methionine 1 bears the N-acetylmethionine mark. One can recognise a PB1 domain in the interval 7-92 (ALVVKVSYGG…KFLKINVNAG (86 aa)). Composition is skewed to polar residues over residues 95 to 108 (TNSAAPESSGSSTP), 171 to 189 (PQESSPCSPVTKPGSSGAS), and 223 to 233 (HSKTSGHVPNS). 2 disordered regions span residues 95 to 114 (TNSAAPESSGSSTPAGMPNP) and 171 to 233 (PQES…VPNS). Residues 286 to 336 (HKGIRCDGCGVLPITGPRFKSKVKEDYDLCTICYSVMGNEGDYTRMDKPVS) form a ZZ-type; degenerate zinc finger. Positions 291, 294, 315, and 318 each coordinate Zn(2+). Positions 657 to 701 (GVSEWDPILEELQEMGFCDDVTNKRLLKKNNGSIKGVVMDLLTGE) constitute a UBA domain. Positions 661–664 (WDPI) match the LIR motif.

As to quaternary structure, homodimer. Interacts with ATG8A, ATG8B, ATG8C, ATG8D, ATG8F and ATG8I. Binds to ubiquitin.

It localises to the cytoplasm. Its subcellular location is the vacuole. Its function is as follows. Autophagic substrate degraded in the vacuole by non-selective autophagy. Requires ATG8 protein expression to be recognized as an autophagic substrate. Acts probably as a receptor for autophagosomal degradation of ubiquitinated proteins. Targets ubiquitinated protein aggregates derived from denatured or damaged non-native proteins generated under stress conditions. Functions additively with the E3 ubiquitin-protein ligase CHIP for autophagosomal degradation of proteotoxic aggregates formed under stress conditions. The sequence is that of Protein NBR1 homolog from Arabidopsis thaliana (Mouse-ear cress).